Here is a 583-residue protein sequence, read N- to C-terminus: MGMVSSQATPVEAYKVQQVQINDQTVEQLVRVQTSAGTTVTTIDAATAERLVKLREEDLIKFSAQGMSQAQMMAKPGMTSPRPIELCAVCGDKASGRHYGAISCEGCKGFFKRSIRKHLGYTCRGNKDCQIIKHNRNRCQYCRLQKCLDMGMKSDSVQCERSPLKTRDKTPGNCAASTDKIYIRKDIRSPLTATPTFVTGSVLAGGDMKSPQGNRQGLFDQGILLNVQTTPTSSPSASTSDSTTDLSTLASVVTSLANMNKKTEEGPSHSQQIYSPSQTLQIISNGDQDVQGGGDNVSKAFDALTKALNTSGDSEAGDLSIDQSANGGSSEVELVKLDSPMLSDHHMQFKLTTPSPMPQFLNVHYICESASRLLFLSMHWARSLPAFQVLSADTHTSMVQKCWSELFTLGLAQCAQAMALSTILTAIVNHLQTSLQQDKLSADRVKAVMEHIWKLQEFVTTTSKLDVDQTEFAYLKTIVLFSPDHPGLSNVRQIEKFQEMAISELHDYEAQTYPSKLNRFSKLLLRLPTLRLLSPAIMEELFFAGLIGNVQIDSIIPYILRMETADYNSAQITMSASPGSLIG.

The segment at residues 84 to 159 is a DNA-binding region (nuclear receptor); it reads IELCAVCGDK…MGMKSDSVQC (76 aa). NR C4-type zinc fingers lie at residues 87–107 and 123–142; these read CAVCGDKASGRHYGAISCEGC and CRGNKDCQIIKHNRNRCQYC. The 316-residue stretch at 248–563 folds into the NR LBD domain; sequence TLASVVTSLA…SIIPYILRME (316 aa).

Belongs to the nuclear hormone receptor family. NR2 subfamily. As to quaternary structure, binds DNA as a monomer. Expressed uniformly in the early embryo. In contrast, larval expression is localized to the epaulettes and mouth epithelium. Expressed in multiple adult organs including lantern muscle, tubefeet, intestine, coelomocytes and gonads. In the adult ovaries and testes, expression is specifically localized to the smooth muscle epithelial layer of cells which surround the ovarioles and acini, respectively (at protein level).

Its subcellular location is the cytoplasm. It is found in the nucleus. Orphan nuclear receptor. Binds to the hormone response element in the upstream promoter region of the CYIIIB gene in vitro. Both isoform 1 and isoform 2 bind DNA. The polypeptide is Orphan steroid hormone receptor 2 (Strongylocentrotus purpuratus (Purple sea urchin)).